A 643-amino-acid polypeptide reads, in one-letter code: Inorganic pyrophosphatase TTM1 (643 aa).

The N-terminal 15 residues, 1–15 (MALDSSVALSPRRRH), are a transit peptide targeting the mitochondrion. The CYTH domain occupies 248–410 (NPTYILKSSK…PHTYIEQIQL (163 aa)). Residues 618 to 638 (LESSTVPILLGLAIGCVGIFA) traverse the membrane as a helical segment.

The cofactor is Mg(2+). In terms of tissue distribution, ubiquitously expressed in all tissues, with strong expression detected in senescent leaves.

The protein resides in the mitochondrion outer membrane. The enzyme catalyses diphosphate + H2O = 2 phosphate + H(+). In terms of biological role, exhibits pyrophosphatase activity with stronger affinity for pyrophosphate (PPi), moderate affinity for ATP and ADP, and weak affinity for tripolyphosphate (PPPi). No activity observed toward uridine substrate. Positively regulates natural and dark-induced leaf senescence. The sequence is that of Inorganic pyrophosphatase TTM1 from Arabidopsis thaliana (Mouse-ear cress).